Here is a 701-residue protein sequence, read N- to C-terminus: Elongation factor G (701 aa).

The tr-type G domain occupies 8 to 290 (ARYRNIGISA…AVIEYLPAPT (283 aa)). GTP is bound by residues 17 to 24 (AHIDAGKT), 88 to 92 (DTPGH), and 142 to 145 (NKMD).

The protein belongs to the TRAFAC class translation factor GTPase superfamily. Classic translation factor GTPase family. EF-G/EF-2 subfamily.

Its subcellular location is the cytoplasm. In terms of biological role, catalyzes the GTP-dependent ribosomal translocation step during translation elongation. During this step, the ribosome changes from the pre-translocational (PRE) to the post-translocational (POST) state as the newly formed A-site-bound peptidyl-tRNA and P-site-bound deacylated tRNA move to the P and E sites, respectively. Catalyzes the coordinated movement of the two tRNA molecules, the mRNA and conformational changes in the ribosome. This is Elongation factor G from Sodalis glossinidius (strain morsitans).